The chain runs to 476 residues: MVQGTTSDAGKTTLVAALCRLLAQEGVRVVPFKPQNMALNSAVTADGGEIGRAQALQAVAAGLQPHTDMNPILLKPSSDTGAQVIIHGKARSDMNARDYHAYKPIAMQAVLESYQRLQTQYESVLVEGAGSPAEVNLRERDIANMGFAEAVDCPVILVADIDRGGVFAHIIGTLACLSESERRRTVGFVINRFRGDISLLEPGLKWLEEQTGKPVLAVLPYLHGLFLDAEDAVEHTQAVRGAFRVVVPVPPRISNHTDFDALRAHPEIDLQLVGPGQPIPAADLIILPGSKNTRGDLEWLIANGWREALLRHLRYGGKIIGICGGYQMLGMTVADPHGVEGTPGESAGLGLLDVATELTRDKRLEQVSGVCAFADVGVSGYEIHMGTSDGAARAQPAFLIDGRPEGARSADDQVLGTYLHGLFDTPDACAALLHWAGLNSDVRVDTAQLREASLQRLAAAARPLLAALRALPDYSR.

The 187-residue stretch at 242 to 428 (AFRVVVPVPP…LHGLFDTPDA (187 aa)) folds into the GATase cobBQ-type domain. Residue Cys323 is the Nucleophile of the active site. Residue His420 is part of the active site.

It belongs to the CobB/CobQ family. CobQ subfamily.

It participates in cofactor biosynthesis; adenosylcobalamin biosynthesis. Its function is as follows. Catalyzes amidations at positions B, D, E, and G on adenosylcobyrinic A,C-diamide. NH(2) groups are provided by glutamine, and one molecule of ATP is hydrogenolyzed for each amidation. The chain is Cobyric acid synthase from Janthinobacterium sp. (strain Marseille) (Minibacterium massiliensis).